Here is a 788-residue protein sequence, read N- to C-terminus: Cadherin-related family member 4 (788 aa).

Positions 1–16 (MVLLRLLVFLFAPVVS) are cleaved as a signal peptide. Over 17–686 (DLCSLPCFIN…DTEAFWQPQP (670 aa)) the chain is Extracellular. 4 consecutive Cadherin domains span residues 237–338 (LEQA…PPRC), 339–449 (LPAL…APRT), 444–554 (ACAP…EPPF), and 551–674 (EPPF…TPML). N-linked (GlcNAc...) asparagine glycosylation occurs at N242. The helical transmembrane segment at 687–707 (WFVVVLTATGALLLLALGWLL) threads the bilayer. The Cytoplasmic portion of the chain corresponds to 708–788 (GRLLQGLAQL…NTHTGARRWL (81 aa)).

It localises to the membrane. In terms of biological role, cadherins are calcium-dependent cell adhesion proteins. They preferentially interact with themselves in a homophilic manner in connecting cells; cadherins may thus contribute to the sorting of heterogeneous cell types. The polypeptide is Cadherin-related family member 4 (CDHR4) (Homo sapiens (Human)).